The sequence spans 235 residues: Orotidine 5'-phosphate decarboxylase (235 aa).

Residues Asp12, Lys34, 61 to 70 (DMKLLDIDNT), Thr116, Arg177, Gln186, and Arg207 contribute to the substrate site. The active-site Proton donor is the Lys63.

This sequence belongs to the OMP decarboxylase family. Type 1 subfamily. Homodimer.

The catalysed reaction is orotidine 5'-phosphate + H(+) = UMP + CO2. It participates in pyrimidine metabolism; UMP biosynthesis via de novo pathway; UMP from orotate: step 2/2. Its function is as follows. Catalyzes the decarboxylation of orotidine 5'-monophosphate (OMP) to uridine 5'-monophosphate (UMP). This is Orotidine 5'-phosphate decarboxylase from Rhizobium etli (strain CIAT 652).